Here is a 231-residue protein sequence, read N- to C-terminus: 7-cyano-7-deazaguanine synthase (231 aa).

Residue 8-18 (FSGGQDSTTCL) coordinates ATP. Residues C188, C197, C200, and C203 each coordinate Zn(2+).

The protein belongs to the QueC family. Zn(2+) serves as cofactor.

It catalyses the reaction 7-carboxy-7-deazaguanine + NH4(+) + ATP = 7-cyano-7-deazaguanine + ADP + phosphate + H2O + H(+). It participates in purine metabolism; 7-cyano-7-deazaguanine biosynthesis. Its function is as follows. Catalyzes the ATP-dependent conversion of 7-carboxy-7-deazaguanine (CDG) to 7-cyano-7-deazaguanine (preQ(0)). This Sodalis glossinidius (strain morsitans) protein is 7-cyano-7-deazaguanine synthase.